A 628-amino-acid polypeptide reads, in one-letter code: UvrABC system protein C (628 aa).

One can recognise a GIY-YIG domain in the interval 21–100 (TGPGIYQFKN…IKELKPRYNV (80 aa)). A UVR domain is found at 214 to 249 (AGLLKELHEKMLTAAAELRFEEAAELKMQLQSLRRY).

Belongs to the UvrC family. Interacts with UvrB in an incision complex.

Its subcellular location is the cytoplasm. In terms of biological role, the UvrABC repair system catalyzes the recognition and processing of DNA lesions. UvrC both incises the 5' and 3' sides of the lesion. The N-terminal half is responsible for the 3' incision and the C-terminal half is responsible for the 5' incision. The chain is UvrABC system protein C from Chlorobium luteolum (strain DSM 273 / BCRC 81028 / 2530) (Pelodictyon luteolum).